The primary structure comprises 299 residues: Protease HtpX homolog (299 aa).

The next 2 membrane-spanning stretches (helical) occupy residues 14 to 34 (WLLLLVFFLLLGLVGYGVGYL) and 39 to 59 (GFGGLILALVIGFIYAVTMIF). H143 contacts Zn(2+). The active site involves E144. Position 147 (H147) interacts with Zn(2+). The next 2 helical transmembrane spans lie at 153–173 (IRISTIAVALASAITMLAVMA) and 198–218 (IILLIISLIAIILAPLAATLV). E227 provides a ligand contact to Zn(2+).

It belongs to the peptidase M48B family. The cofactor is Zn(2+).

The protein resides in the cell membrane. The protein is Protease HtpX homolog of Streptococcus thermophilus (strain ATCC BAA-491 / LMD-9).